The sequence spans 228 residues: UPF0173 metal-dependent hydrolase Smar_0891 (228 aa).

This sequence belongs to the UPF0173 family.

This is UPF0173 metal-dependent hydrolase Smar_0891 from Staphylothermus marinus (strain ATCC 43588 / DSM 3639 / JCM 9404 / F1).